Here is a 359-residue protein sequence, read N- to C-terminus: Pyruvate dehydrogenase E1 component subunit beta, mitochondrial (359 aa).

Residues 1 to 30 (MAVVAGLVRGPLRQASGLLKRRFHRSAPAA) constitute a mitochondrion transit peptide. Position 67 is a phosphotyrosine (Tyr67). Glu89 is a binding site for thiamine diphosphate. Positions 142, 190, 191, 193, and 195 each coordinate K(+). Lys354 carries the N6-acetyllysine modification.

Heterotetramer of two PDHA1 and two PDHB subunits. The heterotetramer interacts with DLAT, and is part of the multimeric pyruvate dehydrogenase complex that contains multiple copies of pyruvate dehydrogenase (E1), dihydrolipoamide acetyltransferase (DLAT, E2) and lipoamide dehydrogenase (DLD, E3). These subunits are bound to an inner core composed of about 48 DLAT and 12 PDHX molecules. Interacts with DLAT. Requires thiamine diphosphate as cofactor.

The protein resides in the mitochondrion matrix. The enzyme catalyses N(6)-[(R)-lipoyl]-L-lysyl-[protein] + pyruvate + H(+) = N(6)-[(R)-S(8)-acetyldihydrolipoyl]-L-lysyl-[protein] + CO2. Its function is as follows. The pyruvate dehydrogenase complex catalyzes the overall conversion of pyruvate to acetyl-CoA and CO(2), and thereby links the glycolytic pathway to the tricarboxylic cycle. The sequence is that of Pyruvate dehydrogenase E1 component subunit beta, mitochondrial (Pdhb) from Mus musculus (Mouse).